The sequence spans 841 residues: Phosphatidylglycerol lysyltransferase (841 aa).

Residues 1-8 (MTKELRSK) lie on the Cytoplasmic side of the membrane. A helical transmembrane segment spans residues 9 to 29 (LFTILKIAFALTLFTIVAITL). The Extracellular segment spans residues 30-52 (YKELSHINLKDAIKSFSKINRFW). The helical transmembrane segment at 53 to 73 (LVALFLSGGASIIVLSIYDVI) threads the bilayer. The Cytoplasmic portion of the chain corresponds to 74–89 (LAKTLKLKIGLAKTIR). Residues 90–110 (IGYIVNALNAVVGFGGFIGAS) traverse the membrane as a helical segment. At 111–129 (VRFLFYKNTTDDKKALFHT) the chain is on the extracellular side. Residues 130–150 (ISIVLISMLTGLSLLSILVVI) traverse the membrane as a helical segment. Residues 151 to 164 (HVFDISHIFTPYPW) are Cytoplasmic-facing. The helical transmembrane segment at 165 to 185 (VKWLMYVVALFLPIFVVFTII) threads the bilayer. Topologically, residues 186–193 (KPVQKTHR) are extracellular. Residues 194 to 216 (LLGVYCTIVSGVEWFVAALVLYM) form a helical membrane-spanning segment. The Cytoplasmic segment spans residues 217–229 (SMAIVGVQIPFAT). A helical transmembrane segment spans residues 230–250 (FMGIFILAALSGLISFIPGGF). The Extracellular portion of the chain corresponds to 251 to 270 (GTFDLVVLLGLKALNVNEEA). A helical membrane pass occupies residues 271–291 (IVLGLSLYRFAYYLFPVLIAL). Residues 292-336 (ILSTFEFRSTAKRYWEDSRILVPVKDMTSLLGSYQKDIIARIPSF) are Cytoplasmic-facing. The helical transmembrane segment at 337-357 (AIALLLLFTSLVFFLNNLTII) threads the bilayer. The Extracellular portion of the chain corresponds to 358-367 (YDGLYDPNHY). A helical transmembrane segment spans residues 368–388 (IYYIIVSIHTCACLLLLLNVI). The Cytoplasmic portion of the chain corresponds to 389 to 392 (GVYK). Residues 393–413 (LSKRAILFSIISVLFIFIATA) traverse the membrane as a helical segment. At 414–415 (YT) the chain is on the extracellular side. A helical membrane pass occupies residues 416-436 (YASFILLSWLTVIFILLLVFY). Residues 437-448 (RRARVIKRPFRY) lie on the Cytoplasmic side of the membrane. The helical transmembrane segment at 449 to 469 (SKLLLSVITGAIILYINHLVI) threads the bilayer. Residues 470–489 (KSTFYSLEIYHIEMLTSILR) are Extracellular-facing. A helical membrane pass occupies residues 490–510 (YYFWITILLVAIIVGVIVWWF). At 511–841 (EYRYRSSNSR…KVMRVIRKNN (331 aa)) the chain is on the cytoplasmic side.

It belongs to the LPG synthase family.

Its subcellular location is the cell membrane. It catalyses the reaction L-lysyl-tRNA(Lys) + a 1,2-diacyl-sn-glycero-3-phospho-(1'-sn-glycerol) = a 1,2-diacyl-sn-glycero-3-phospho-1'-(3'-O-L-lysyl)-sn-glycerol + tRNA(Lys). Its function is as follows. Catalyzes the transfer of a lysyl group from L-lysyl-tRNA(Lys) to membrane-bound phosphatidylglycerol (PG), which produces lysylphosphatidylglycerol (LPG), a major component of the bacterial membrane with a positive net charge. LPG synthesis contributes to bacterial virulence as it is involved in the resistance mechanism against cationic antimicrobial peptides (CAMP) produces by the host's immune system (defensins, cathelicidins) and by the competing microorganisms (bacteriocins). In fact, the modification of anionic phosphatidylglycerol with positively charged L-lysine results in repulsion of the peptides. In Staphylococcus xylosus, this protein is Phosphatidylglycerol lysyltransferase (mprF).